The sequence spans 473 residues: Serine palmitoyltransferase 1 (473 aa).

Topologically, residues 1-15 are lumenal; sequence MATVAEQWVLVEMVQ. The segment at 1–66 is interaction with SPTLC2; the sequence is MATVAEQWVL…KEELIEEWQP (66 aa). The helical transmembrane segment at 16–36 threads the bilayer; sequence ALYEAPAYHLILEGILILWII. The Cytoplasmic segment spans residues 37 to 473; the sequence is RLLFSKTYKL…ISEVAQTVLL (437 aa). A Phosphotyrosine; by ABL modification is found at Tyr-164.

This sequence belongs to the class-II pyridoxal-phosphate-dependent aminotransferase family. As to quaternary structure, component of the serine palmitoyltransferase (SPT) complex, which is also composed of SPTLC2 or SPTLC3 and SPTSSA or SPTSSB. The heterodimer with SPTLC2 or SPTLC3 forms the catalytic core of the enzyme, while SPTSSA or SPTSSB subunits determine substrate specificity. SPT also interacts with ORMDL proteins, especially ORMDL3, which negatively regulate SPT activity in the presence of ceramides. Forms dimers of heterodimers with SPTLC2. Interacts with RTN4. It depends on pyridoxal 5'-phosphate as a cofactor. Post-translationally, phosphorylation at Tyr-164 inhibits activity and promotes cell survival.

The protein localises to the endoplasmic reticulum membrane. The catalysed reaction is L-serine + hexadecanoyl-CoA + H(+) = 3-oxosphinganine + CO2 + CoA. The enzyme catalyses octadecanoyl-CoA + L-serine + H(+) = 3-oxoeicosasphinganine + CO2 + CoA. It carries out the reaction tetradecanoyl-CoA + L-serine + H(+) = 3-oxohexadecasphinganine + CO2 + CoA. It catalyses the reaction dodecanoyl-CoA + L-serine + H(+) = 3-oxotetradecasphinganine + CO2 + CoA. It participates in lipid metabolism; sphingolipid metabolism. Its activity is regulated as follows. SPT complex catalytic activity is negatively regulated by ORMDL proteins, including ORMDL3, in the presence of ceramides. This mechanism allows to maintain ceramide levels at sufficient concentrations for the production of complex sphingolipids, but which prevents the accumulation of ceramides to levels that trigger apoptosis. In terms of biological role, component of the serine palmitoyltransferase multisubunit enzyme (SPT) that catalyzes the initial and rate-limiting step in sphingolipid biosynthesis by condensing L-serine and activated acyl-CoA (most commonly palmitoyl-CoA) to form long-chain bases. The SPT complex is also composed of SPTLC2 or SPTLC3 and SPTSSA or SPTSSB. Within this complex, the heterodimer with SPTLC2 or SPTLC3 forms the catalytic core. The composition of the serine palmitoyltransferase (SPT) complex determines the substrate preference. The SPTLC1-SPTLC2-SPTSSA complex shows a strong preference for C16-CoA substrate, while the SPTLC1-SPTLC3-SPTSSA isozyme uses both C14-CoA and C16-CoA as substrates, with a slight preference for C14-CoA. The SPTLC1-SPTLC2-SPTSSB complex shows a strong preference for C18-CoA substrate, while the SPTLC1-SPTLC3-SPTSSB isozyme displays an ability to use a broader range of acyl-CoAs, without apparent preference. Required for adipocyte cell viability and metabolic homeostasis. The polypeptide is Serine palmitoyltransferase 1 (SPTLC1) (Bos taurus (Bovine)).